The primary structure comprises 393 residues: Formate-dependent phosphoribosylglycinamide formyltransferase (393 aa).

N(1)-(5-phospho-beta-D-ribosyl)glycinamide contacts are provided by residues 22-23 (EL) and Glu82. Residues Arg114, Lys155, 160 to 165 (SSGKGQ), 195 to 198 (EGFV), and Glu203 each bind ATP. One can recognise an ATP-grasp domain in the interval 119–308 (RLAAEELGLV…EFALHVRAIL (190 aa)). Mg(2+) contacts are provided by Glu267 and Glu279. N(1)-(5-phospho-beta-D-ribosyl)glycinamide contacts are provided by residues Asp286, Lys356, and 363-364 (RR).

The protein belongs to the PurK/PurT family. Homodimer.

It carries out the reaction N(1)-(5-phospho-beta-D-ribosyl)glycinamide + formate + ATP = N(2)-formyl-N(1)-(5-phospho-beta-D-ribosyl)glycinamide + ADP + phosphate + H(+). It participates in purine metabolism; IMP biosynthesis via de novo pathway; N(2)-formyl-N(1)-(5-phospho-D-ribosyl)glycinamide from N(1)-(5-phospho-D-ribosyl)glycinamide (formate route): step 1/1. In terms of biological role, involved in the de novo purine biosynthesis. Catalyzes the transfer of formate to 5-phospho-ribosyl-glycinamide (GAR), producing 5-phospho-ribosyl-N-formylglycinamide (FGAR). Formate is provided by PurU via hydrolysis of 10-formyl-tetrahydrofolate. The chain is Formate-dependent phosphoribosylglycinamide formyltransferase from Solidesulfovibrio magneticus (strain ATCC 700980 / DSM 13731 / RS-1) (Desulfovibrio magneticus).